The primary structure comprises 588 residues: Sulfite reductase [NADPH] hemoprotein beta-component (588 aa).

Basic and acidic residues predominate over residues 1-10 (MSDKKQKGLE). Residues 1–20 (MSDKKQKGLEWQDNPLSDNE) form a disordered region. Residues C443, C449, C488, and C492 each coordinate [4Fe-4S] cluster. A siroheme-binding site is contributed by C492.

The protein belongs to the nitrite and sulfite reductase 4Fe-4S domain family. As to quaternary structure, alpha(8)-beta(8). The alpha component is a flavoprotein, the beta component is a hemoprotein. The cofactor is siroheme. [4Fe-4S] cluster is required as a cofactor.

It carries out the reaction hydrogen sulfide + 3 NADP(+) + 3 H2O = sulfite + 3 NADPH + 4 H(+). Its pathway is sulfur metabolism; hydrogen sulfide biosynthesis; hydrogen sulfide from sulfite (NADPH route): step 1/1. In terms of biological role, component of the sulfite reductase complex that catalyzes the 6-electron reduction of sulfite to sulfide. This is one of several activities required for the biosynthesis of L-cysteine from sulfate. The polypeptide is Sulfite reductase [NADPH] hemoprotein beta-component (Mannheimia succiniciproducens (strain KCTC 0769BP / MBEL55E)).